A 181-amino-acid polypeptide reads, in one-letter code: Large ribosomal subunit protein uL5 (181 aa).

This sequence belongs to the universal ribosomal protein uL5 family. In terms of assembly, part of the 50S ribosomal subunit; part of the 5S rRNA/L5/L18/L25 subcomplex. Contacts the 5S rRNA and the P site tRNA. Forms a bridge to the 30S subunit in the 70S ribosome.

Functionally, this is one of the proteins that bind and probably mediate the attachment of the 5S RNA into the large ribosomal subunit, where it forms part of the central protuberance. In the 70S ribosome it contacts protein S13 of the 30S subunit (bridge B1b), connecting the 2 subunits; this bridge is implicated in subunit movement. Contacts the P site tRNA; the 5S rRNA and some of its associated proteins might help stabilize positioning of ribosome-bound tRNAs. This chain is Large ribosomal subunit protein uL5, found in Nitrosococcus oceani (strain ATCC 19707 / BCRC 17464 / JCM 30415 / NCIMB 11848 / C-107).